The primary structure comprises 571 residues: Proline--tRNA ligase (571 aa).

It belongs to the class-II aminoacyl-tRNA synthetase family. ProS type 1 subfamily. As to quaternary structure, homodimer.

Its subcellular location is the cytoplasm. The catalysed reaction is tRNA(Pro) + L-proline + ATP = L-prolyl-tRNA(Pro) + AMP + diphosphate. In terms of biological role, catalyzes the attachment of proline to tRNA(Pro) in a two-step reaction: proline is first activated by ATP to form Pro-AMP and then transferred to the acceptor end of tRNA(Pro). As ProRS can inadvertently accommodate and process non-cognate amino acids such as alanine and cysteine, to avoid such errors it has two additional distinct editing activities against alanine. One activity is designated as 'pretransfer' editing and involves the tRNA(Pro)-independent hydrolysis of activated Ala-AMP. The other activity is designated 'posttransfer' editing and involves deacylation of mischarged Ala-tRNA(Pro). The misacylated Cys-tRNA(Pro) is not edited by ProRS. This chain is Proline--tRNA ligase, found in Acinetobacter baumannii (strain AB307-0294).